A 201-amino-acid polypeptide reads, in one-letter code: Small ribosomal subunit protein uS4c (201 aa).

The interval 16–37 (GALPGLTSKRPRSGSDLRNQSR) is disordered. One can recognise an S4 RNA-binding domain in the interval 89-152 (MRLDNTLFRL…RSRTLIQNHI (64 aa)).

This sequence belongs to the universal ribosomal protein uS4 family. Part of the 30S ribosomal subunit. Contacts protein S5. The interaction surface between S4 and S5 is involved in control of translational fidelity.

The protein localises to the plastid. It localises to the chloroplast. In terms of biological role, one of the primary rRNA binding proteins, it binds directly to 16S rRNA where it nucleates assembly of the body of the 30S subunit. Functionally, with S5 and S12 plays an important role in translational accuracy. The protein is Small ribosomal subunit protein uS4c (rps4) of Chloranthus spicatus (Chulantree).